A 437-amino-acid chain; its full sequence is 3-phosphoshikimate 1-carboxyvinyltransferase (437 aa).

Residues Lys-24, Ser-25, and Arg-29 each contribute to the 3-phosphoshikimate site. A phosphoenolpyruvate-binding site is contributed by Lys-24. Phosphoenolpyruvate is bound by residues Gly-95 and Arg-123. 4 residues coordinate 3-phosphoshikimate: Ser-168, Gln-170, Asp-317, and Lys-344. Phosphoenolpyruvate is bound at residue Gln-170. Asp-317 acts as the Proton acceptor in catalysis. The phosphoenolpyruvate site is built by Arg-348 and Arg-390.

It belongs to the EPSP synthase family. Monomer.

The protein localises to the cytoplasm. The enzyme catalyses 3-phosphoshikimate + phosphoenolpyruvate = 5-O-(1-carboxyvinyl)-3-phosphoshikimate + phosphate. It participates in metabolic intermediate biosynthesis; chorismate biosynthesis; chorismate from D-erythrose 4-phosphate and phosphoenolpyruvate: step 6/7. Catalyzes the transfer of the enolpyruvyl moiety of phosphoenolpyruvate (PEP) to the 5-hydroxyl of shikimate-3-phosphate (S3P) to produce enolpyruvyl shikimate-3-phosphate and inorganic phosphate. This Wolinella succinogenes (strain ATCC 29543 / DSM 1740 / CCUG 13145 / JCM 31913 / LMG 7466 / NCTC 11488 / FDC 602W) (Vibrio succinogenes) protein is 3-phosphoshikimate 1-carboxyvinyltransferase.